The chain runs to 130 residues: Small ribosomal subunit protein uS11 (130 aa).

This sequence belongs to the universal ribosomal protein uS11 family. As to quaternary structure, part of the 30S ribosomal subunit. Interacts with proteins S7 and S18. Binds to IF-3.

Located on the platform of the 30S subunit, it bridges several disparate RNA helices of the 16S rRNA. Forms part of the Shine-Dalgarno cleft in the 70S ribosome. In Shewanella sediminis (strain HAW-EB3), this protein is Small ribosomal subunit protein uS11.